Here is a 206-residue protein sequence, read N- to C-terminus: ATP synthase subunit b (206 aa).

A helical membrane pass occupies residues Val14–Ala34.

Belongs to the ATPase B chain family. In terms of assembly, F-type ATPases have 2 components, F(1) - the catalytic core - and F(0) - the membrane proton channel. F(1) has five subunits: alpha(3), beta(3), gamma(1), delta(1), epsilon(1). F(0) has three main subunits: a(1), b(2) and c(10-14). The alpha and beta chains form an alternating ring which encloses part of the gamma chain. F(1) is attached to F(0) by a central stalk formed by the gamma and epsilon chains, while a peripheral stalk is formed by the delta and b chains.

Its subcellular location is the cell inner membrane. Its function is as follows. F(1)F(0) ATP synthase produces ATP from ADP in the presence of a proton or sodium gradient. F-type ATPases consist of two structural domains, F(1) containing the extramembraneous catalytic core and F(0) containing the membrane proton channel, linked together by a central stalk and a peripheral stalk. During catalysis, ATP synthesis in the catalytic domain of F(1) is coupled via a rotary mechanism of the central stalk subunits to proton translocation. Functionally, component of the F(0) channel, it forms part of the peripheral stalk, linking F(1) to F(0). In Geobacter metallireducens (strain ATCC 53774 / DSM 7210 / GS-15), this protein is ATP synthase subunit b.